We begin with the raw amino-acid sequence, 301 residues long: Protoheme IX farnesyltransferase (301 aa).

9 helical membrane passes run 34–54 (LVVFTAITGMLIAPGTIHPLI), 55–75 (GLVSTVCVALGAGAAGAFNMW), 102–121 (AWECGMVLATLSVFVMAIAV), 125–144 (SALLLAGSIFSYAVVYTMLL), 152–172 (IVIGGIAGAFPPVIGWASVSG), 181–201 (LFAIIFVWTPPHFWAIALLTL), 222–242 (SHILLYSIILAVVGATPGLFV), 247–267 (LYEILATGLSATFIAYAIAVF), and 280–300 (GLFKYSIYYLFLLFAVVIACV).

It belongs to the UbiA prenyltransferase family. Protoheme IX farnesyltransferase subfamily.

It is found in the cell inner membrane. It carries out the reaction heme b + (2E,6E)-farnesyl diphosphate + H2O = Fe(II)-heme o + diphosphate. It participates in porphyrin-containing compound metabolism; heme O biosynthesis; heme O from protoheme: step 1/1. In terms of biological role, converts heme B (protoheme IX) to heme O by substitution of the vinyl group on carbon 2 of heme B porphyrin ring with a hydroxyethyl farnesyl side group. The polypeptide is Protoheme IX farnesyltransferase (Anaplasma marginale (strain Florida)).